A 300-amino-acid polypeptide reads, in one-letter code: 4-diphosphocytidyl-2-C-methyl-D-erythritol kinase (300 aa).

The active site involves lysine 22. ATP is bound at residue 105–115 (PMGGGLGGGSS). Aspartate 147 is an active-site residue.

It belongs to the GHMP kinase family. IspE subfamily.

The enzyme catalyses 4-CDP-2-C-methyl-D-erythritol + ATP = 4-CDP-2-C-methyl-D-erythritol 2-phosphate + ADP + H(+). The protein operates within isoprenoid biosynthesis; isopentenyl diphosphate biosynthesis via DXP pathway; isopentenyl diphosphate from 1-deoxy-D-xylulose 5-phosphate: step 3/6. Catalyzes the phosphorylation of the position 2 hydroxy group of 4-diphosphocytidyl-2C-methyl-D-erythritol. In Colwellia psychrerythraea (strain 34H / ATCC BAA-681) (Vibrio psychroerythus), this protein is 4-diphosphocytidyl-2-C-methyl-D-erythritol kinase.